We begin with the raw amino-acid sequence, 334 residues long: Large ribosomal subunit protein uL3 (334 aa).

Positions 1–10 (MGMKKSRPRR) are enriched in basic residues. The disordered stretch occupies residues 1–20 (MGMKKSRPRRGSLAFSPRKR).

This sequence belongs to the universal ribosomal protein uL3 family. In terms of assembly, part of the 50S ribosomal subunit. Forms a cluster with proteins L14 and L24e.

One of the primary rRNA binding proteins, it binds directly near the 3'-end of the 23S rRNA, where it nucleates assembly of the 50S subunit. The protein is Large ribosomal subunit protein uL3 of Methanococcus maripaludis (strain C7 / ATCC BAA-1331).